Consider the following 142-residue polypeptide: UPF0102 protein Bamb_0202 (142 aa).

Residues 1–23 (MCHAAPAAPASGRGLPHGGGNFS) form a disordered region.

The protein belongs to the UPF0102 family.

The protein is UPF0102 protein Bamb_0202 of Burkholderia ambifaria (strain ATCC BAA-244 / DSM 16087 / CCUG 44356 / LMG 19182 / AMMD) (Burkholderia cepacia (strain AMMD)).